A 118-amino-acid polypeptide reads, in one-letter code: Ribonuclease P protein component (118 aa).

Belongs to the RnpA family. As to quaternary structure, consists of a catalytic RNA component (M1 or rnpB) and a protein subunit.

It carries out the reaction Endonucleolytic cleavage of RNA, removing 5'-extranucleotides from tRNA precursor.. In terms of biological role, RNaseP catalyzes the removal of the 5'-leader sequence from pre-tRNA to produce the mature 5'-terminus. It can also cleave other RNA substrates such as 4.5S RNA. The protein component plays an auxiliary but essential role in vivo by binding to the 5'-leader sequence and broadening the substrate specificity of the ribozyme. This chain is Ribonuclease P protein component, found in Rickettsia peacockii (strain Rustic).